The following is a 283-amino-acid chain: Polyamine aminopropyltransferase (283 aa).

One can recognise a PABS domain in the interval 5–238; it reads STWIDEYHKG…GIWSWTFASE (234 aa). Glutamine 32 contacts S-methyl-5'-thioadenosine. Residues histidine 63 and aspartate 87 each contribute to the spermidine site. S-methyl-5'-thioadenosine contacts are provided by residues glutamate 107 and 139 to 140; that span reads DG. Residue aspartate 158 is the Proton acceptor of the active site. Residue 158–161 coordinates spermidine; sequence DCSD.

This sequence belongs to the spermidine/spermine synthase family. In terms of assembly, homodimer or homotetramer.

It is found in the cytoplasm. It carries out the reaction S-adenosyl 3-(methylsulfanyl)propylamine + putrescine = S-methyl-5'-thioadenosine + spermidine + H(+). It functions in the pathway amine and polyamine biosynthesis; spermidine biosynthesis; spermidine from putrescine: step 1/1. Its function is as follows. Catalyzes the irreversible transfer of a propylamine group from the amino donor S-adenosylmethioninamine (decarboxy-AdoMet) to putrescine (1,4-diaminobutane) to yield spermidine. This Prochlorococcus marinus (strain MIT 9312) protein is Polyamine aminopropyltransferase.